The chain runs to 200 residues: Pre-mRNA cleavage factor Im 25 kDa subunit 2 (200 aa).

The 128-residue stretch at 45-172 (GMRTSVEGIL…KLLAVPLFEL (128 aa)) folds into the Nudix hydrolase domain. Positions 72 to 74 (TFC) are interaction with RNA. Residues 79–100 (GRLKPGENEADGLKRKLTSKLG) carry the Nudix box motif.

The protein belongs to the Nudix hydrolase family. CPSF5 subfamily. In terms of assembly, homodimer. Component of the cleavage factor Im (CFIm) complex. Forms a complex with cleavage and polyadenylation specificity factor (CPSF) subunits FIPS5, PAPS4 and CPSF30.

The protein localises to the nucleus. In terms of biological role, component of the cleavage factor Im (CFIm) complex that plays a key role in pre-mRNA 3'-processing. Involved in association with CPSF6 or CPSF7 in pre-MRNA 3'-end poly(A) site cleavage and poly(A) addition. NUDT21/CPSF5 binds to cleavage and polyadenylation RNA substrates. The homodimer mediates simultaneous sequence-specific recognition of two 5'-UGUA-3' elements within the pre-mRNA. Binds to, but does not hydrolyze mono- and di-adenosine nucleotides. May have a role in mRNA export. This is Pre-mRNA cleavage factor Im 25 kDa subunit 2 from Arabidopsis thaliana (Mouse-ear cress).